The following is a 156-amino-acid chain: Ribosomal RNA large subunit methyltransferase H (156 aa).

Residues Leu-73, Gly-104, and 123–128 contribute to the S-adenosyl-L-methionine site; that span reads LSALTL.

The protein belongs to the RNA methyltransferase RlmH family. As to quaternary structure, homodimer.

The protein resides in the cytoplasm. The catalysed reaction is pseudouridine(1915) in 23S rRNA + S-adenosyl-L-methionine = N(3)-methylpseudouridine(1915) in 23S rRNA + S-adenosyl-L-homocysteine + H(+). In terms of biological role, specifically methylates the pseudouridine at position 1915 (m3Psi1915) in 23S rRNA. This chain is Ribosomal RNA large subunit methyltransferase H, found in Shewanella frigidimarina (strain NCIMB 400).